Here is a 195-residue protein sequence, read N- to C-terminus: Imidazoleglycerol-phosphate dehydratase (195 aa).

Belongs to the imidazoleglycerol-phosphate dehydratase family.

The protein resides in the cytoplasm. It catalyses the reaction D-erythro-1-(imidazol-4-yl)glycerol 3-phosphate = 3-(imidazol-4-yl)-2-oxopropyl phosphate + H2O. It participates in amino-acid biosynthesis; L-histidine biosynthesis; L-histidine from 5-phospho-alpha-D-ribose 1-diphosphate: step 6/9. The protein is Imidazoleglycerol-phosphate dehydratase of Cupriavidus pinatubonensis (strain JMP 134 / LMG 1197) (Cupriavidus necator (strain JMP 134)).